Here is a 2568-residue protein sequence, read N- to C-terminus: Highly reducing polyketide synthase resH (2568 aa).

A Ketosynthase family 3 (KS3) domain is found at 9–437 (PEPIAIVGMA…GANAHAILDA (429 aa)). Catalysis depends on for beta-ketoacyl synthase activity residues cysteine 184, histidine 319, and histidine 359. A Malonyl-CoA:ACP transacylase (MAT) domain is found at 549 to 877 (FIFTGQGAQW…KLAGSLFLSG (329 aa)). The tract at residues 942–1081 (HDLLGSRLPG…TNDQLLWPDD (140 aa)) is N-terminal hotdog fold. The region spanning 942 to 1244 (HDLLGSRLPG…FSSLETASSD (303 aa)) is the PKS/mFAS DH domain. The active-site Proton acceptor; for dehydratase activity is histidine 974. The tract at residues 1091–1244 (NKDSYDRRWY…FSSLETASSD (154 aa)) is C-terminal hotdog fold. Aspartate 1156 functions as the Proton donor; for dehydratase activity in the catalytic mechanism. A methyltransferase (CMet) domain region spans residues 1295-1595 (VTRLAIRSSA…SGADVVLDDY (301 aa)). The Enoyl reductase (ER) domain occupies 1853–2154 (GRLDSFYFKE…QEDSVGLAVL (302 aa)). The 181-residue stretch at 2177–2357 (ASYLLIGCLG…QATSIALGMI (181 aa)) folds into the Ketoreductase (KR) domain. The 79-residue stretch at 2485–2563 (AVKSAILGLI…GLADQVVSLA (79 aa)) folds into the Carrier domain. The residue at position 2522 (serine 2522) is an O-(pantetheine 4'-phosphoryl)serine.

The cofactor is pantetheine 4'-phosphate.

It participates in antifungal biosynthesis. Highly reducing polyketide synthase; part of the gene cluster that mediates the biosynthesis of the tetrahydropyranyl antifungal agent restricticin that acts as an inhibitor of CYP51 and blocks the ergosterol biosynthesis. The highly reducing polyketide synthase resH, the short chain dehydrogenase resG, the cyclase resF, the FAD-dependent monooxygenase resA and the enoylreductase resD are required to generate the first stable intermediate desmethylrestrictinol. ResH with resD biosynthesize the first polyketide chain intermediate that is reduced by resG, followed by epoxidation by resA before 6-endo cyclization via epoxide opening by resF leads to desmethylrestrictinol. The methyltransferase resE then catalyzes the C4 O-methylation of desmethylrestrictinol to produce restrictinol, and the nonribosomal peptide synthetase resC catalyzes the C3 esterification of restrictinol with glycine that leads to restricticin. The protein is Highly reducing polyketide synthase resH of Aspergillus sclerotiorum.